We begin with the raw amino-acid sequence, 445 residues long: Serine--tRNA ligase (445 aa).

An L-serine-binding site is contributed by 250–252 (TAE). 281–283 (RAE) contributes to the ATP binding site. An L-serine-binding site is contributed by Glu-304. Residue 368-371 (EISS) participates in ATP binding. Residue Ser-404 coordinates L-serine.

The protein belongs to the class-II aminoacyl-tRNA synthetase family. Type-1 seryl-tRNA synthetase subfamily. As to quaternary structure, homodimer. The tRNA molecule binds across the dimer.

Its subcellular location is the cytoplasm. The catalysed reaction is tRNA(Ser) + L-serine + ATP = L-seryl-tRNA(Ser) + AMP + diphosphate + H(+). It catalyses the reaction tRNA(Sec) + L-serine + ATP = L-seryl-tRNA(Sec) + AMP + diphosphate + H(+). It participates in aminoacyl-tRNA biosynthesis; selenocysteinyl-tRNA(Sec) biosynthesis; L-seryl-tRNA(Sec) from L-serine and tRNA(Sec): step 1/1. Catalyzes the attachment of serine to tRNA(Ser). Is also able to aminoacylate tRNA(Sec) with serine, to form the misacylated tRNA L-seryl-tRNA(Sec), which will be further converted into selenocysteinyl-tRNA(Sec). The sequence is that of Serine--tRNA ligase from Azorhizobium caulinodans (strain ATCC 43989 / DSM 5975 / JCM 20966 / LMG 6465 / NBRC 14845 / NCIMB 13405 / ORS 571).